A 201-amino-acid polypeptide reads, in one-letter code: Holliday junction branch migration complex subunit RuvA (201 aa).

A domain I region spans residues 1–64 (MYEYIRGQFQ…EDFIGLYGFT (64 aa)). The tract at residues 65 to 143 (TREELEMFKL…PDELTSEEGQ (79 aa)) is domain II. The flexible linker stretch occupies residues 144 to 152 (LIEGINDNS). A domain III region spans residues 153-201 (DYSFNINETLSALMALGYTEKEAQKALEKVDKTLSIENMIKESLKLLMR).

Belongs to the RuvA family. In terms of assembly, homotetramer. Forms an RuvA(8)-RuvB(12)-Holliday junction (HJ) complex. HJ DNA is sandwiched between 2 RuvA tetramers; dsDNA enters through RuvA and exits via RuvB. An RuvB hexamer assembles on each DNA strand where it exits the tetramer. Each RuvB hexamer is contacted by two RuvA subunits (via domain III) on 2 adjacent RuvB subunits; this complex drives branch migration. In the full resolvosome a probable DNA-RuvA(4)-RuvB(12)-RuvC(2) complex forms which resolves the HJ.

Its subcellular location is the cytoplasm. Functionally, the RuvA-RuvB-RuvC complex processes Holliday junction (HJ) DNA during genetic recombination and DNA repair, while the RuvA-RuvB complex plays an important role in the rescue of blocked DNA replication forks via replication fork reversal (RFR). RuvA specifically binds to HJ cruciform DNA, conferring on it an open structure. The RuvB hexamer acts as an ATP-dependent pump, pulling dsDNA into and through the RuvAB complex. HJ branch migration allows RuvC to scan DNA until it finds its consensus sequence, where it cleaves and resolves the cruciform DNA. This is Holliday junction branch migration complex subunit RuvA from Clostridium perfringens (strain 13 / Type A).